The following is a 933-amino-acid chain: Protein inturned (933 aa).

The tract at residues 1–54 (MASLPLCGSVRSPEGLPGDPSSQEDRQDYDPEDPVSGSGSYSPTSTDSNDLEPE) is disordered. A compositionally biased stretch (polar residues) spans 37–48 (GSGSYSPTSTDS). The PDZ domain occupies 186–264 (LVGIIHQTKW…PMQVKLTFEN (79 aa)). Serine 675 bears the Phosphoserine mark. The segment at 703–742 (LKTRKPSPSRSGGPDSGLEGEGVGLSPHTTESQGSHGSEE) is disordered. Low complexity predominate over residues 710–719 (PSRSGGPDSG). The segment covering 729 to 738 (PHTTESQGSH) has biased composition (polar residues).

It belongs to the inturned family. In terms of assembly, component of the CPLANE (ciliogenesis and planar polarity effectors) complex, composed of INTU, FUZ and WDPCP. Interacts with CPLANE1. Interacts with NPHP4 and DAAM1; INTU is mediating the interaction between NPHP4 and DAAM1.

The protein resides in the cytoplasm. The protein localises to the cell surface. It localises to the cytoskeleton. It is found in the cilium basal body. Its subcellular location is the microtubule organizing center. The protein resides in the centrosome. The protein localises to the centriole. In terms of biological role, plays a key role in ciliogenesis and embryonic development. Regulator of cilia formation by controlling the organization of the apical actin cytoskeleton and the positioning of the basal bodies at the apical cell surface, which in turn is essential for the normal orientation of elongating ciliary microtubules. Plays a key role in definition of cell polarity via its role in ciliogenesis but not via conversion extension. Has an indirect effect on hedgehog signaling. Proposed to function as core component of the CPLANE (ciliogenesis and planar polarity effectors) complex involved in the recruitment of peripheral IFT-A proteins to basal bodies. Required for recruitment of CPLANE2 to the mother centriole. Binds phosphatidylinositol 3-phosphate with highest affinity, followed by phosphatidylinositol 4-phosphate and phosphatidylinositol 5-phosphate. This chain is Protein inturned (INTU), found in Bos taurus (Bovine).